Consider the following 351-residue polypeptide: Protein RecA (351 aa).

An ATP-binding site is contributed by G67 to T74.

Belongs to the RecA family.

The protein localises to the cytoplasm. Functionally, can catalyze the hydrolysis of ATP in the presence of single-stranded DNA, the ATP-dependent uptake of single-stranded DNA by duplex DNA, and the ATP-dependent hybridization of homologous single-stranded DNAs. It interacts with LexA causing its activation and leading to its autocatalytic cleavage. In Mannheimia succiniciproducens (strain KCTC 0769BP / MBEL55E), this protein is Protein RecA.